A 346-amino-acid polypeptide reads, in one-letter code: Large ribosomal subunit protein uL10 (346 aa).

A disordered region spans residues 305–346 (EVPAAPAPEAKEEKKEEAEEEEEEKKEVSEEDLSAGLGALFG). Residues 322–337 (AEEEEEEKKEVSEEDL) are compositionally biased toward acidic residues.

It belongs to the universal ribosomal protein uL10 family. As to quaternary structure, part of the 50S ribosomal subunit. Forms part of the ribosomal stalk which helps the ribosome interact with GTP-bound translation factors. Forms a heptameric L10(L12)2(L12)2(L12)2 complex, where L10 forms an elongated spine to which the L12 dimers bind in a sequential fashion.

In terms of biological role, forms part of the ribosomal stalk, playing a central role in the interaction of the ribosome with GTP-bound translation factors. This is Large ribosomal subunit protein uL10 from Ignicoccus hospitalis (strain KIN4/I / DSM 18386 / JCM 14125).